Consider the following 150-residue polypeptide: D-aminoacyl-tRNA deacylase (150 aa).

Residues 138–139 carry the Gly-cisPro motif, important for rejection of L-amino acids motif; that stretch reads GP.

Belongs to the DTD family. In terms of assembly, homodimer.

The protein resides in the cytoplasm. It catalyses the reaction glycyl-tRNA(Ala) + H2O = tRNA(Ala) + glycine + H(+). The catalysed reaction is a D-aminoacyl-tRNA + H2O = a tRNA + a D-alpha-amino acid + H(+). Its function is as follows. An aminoacyl-tRNA editing enzyme that deacylates mischarged D-aminoacyl-tRNAs. Also deacylates mischarged glycyl-tRNA(Ala), protecting cells against glycine mischarging by AlaRS. Acts via tRNA-based rather than protein-based catalysis; rejects L-amino acids rather than detecting D-amino acids in the active site. By recycling D-aminoacyl-tRNA to D-amino acids and free tRNA molecules, this enzyme counteracts the toxicity associated with the formation of D-aminoacyl-tRNA entities in vivo and helps enforce protein L-homochirality. The chain is D-aminoacyl-tRNA deacylase from Dechloromonas aromatica (strain RCB).